Here is a 284-residue protein sequence, read N- to C-terminus: MTKPDLASLEKTIEKAFDQRDGINTATRGEVREAVEQSLILLDRGEVRVAEKQADGNWHVNQWLKKAVLLSFRLNPMEVIKGGPGQSSWWDKVPSKFDGWTANEFEKAGFRAVPNCIVRHSAYIAPNAILMPSFVNLGAYVDKGAMIDTWATVGSCAQIGKNVHLSGGVGIGGVLEPMQAGPTIIEDNCFIGARSEVVEGCIVREGSVLGMGVFIGKSTKIVDRATGEVFYGEVPPYSVVVAGTMPGKNVPGENWGPSLYCAVIVKRADEKTRSKTSINELLRD.

Residues R111 and D148 each coordinate substrate.

This sequence belongs to the transferase hexapeptide repeat family. In terms of assembly, homotrimer.

The protein localises to the cytoplasm. The catalysed reaction is (S)-2,3,4,5-tetrahydrodipicolinate + succinyl-CoA + H2O = (S)-2-succinylamino-6-oxoheptanedioate + CoA. The protein operates within amino-acid biosynthesis; L-lysine biosynthesis via DAP pathway; LL-2,6-diaminopimelate from (S)-tetrahydrodipicolinate (succinylase route): step 1/3. This chain is 2,3,4,5-tetrahydropyridine-2,6-dicarboxylate N-succinyltransferase, found in Brucella suis (strain ATCC 23445 / NCTC 10510).